The following is a 142-amino-acid chain: Small ribosomal subunit protein uS9 (142 aa).

Residues 117-142 form a disordered region; sequence KGDPRRTEHKKPGIKHARSKRQKAYR. A compositionally biased stretch (basic residues) spans 123-142; it reads TEHKKPGIKHARSKRQKAYR.

The protein belongs to the universal ribosomal protein uS9 family.

The protein is Small ribosomal subunit protein uS9 of Pyrobaculum aerophilum (strain ATCC 51768 / DSM 7523 / JCM 9630 / CIP 104966 / NBRC 100827 / IM2).